The sequence spans 276 residues: 3,4-dihydroxyphenylacetate 2,3-dioxygenase (276 aa).

It depends on Fe cation as a cofactor.

The enzyme catalyses 3,4-dihydroxyphenylacetate + O2 = 2-hydroxy-5-carboxymethylmuconate semialdehyde + H(+). It functions in the pathway aromatic compound metabolism; 4-hydroxyphenylacetate degradation; pyruvate and succinate semialdehyde from 4-hydroxyphenylacetate: step 2/7. Its function is as follows. Transforms homoprotocatechuic acid (HPC) into 5-carboxymethyl-2-hydroxy-muconic semialdehyde (CHMS). This is 3,4-dihydroxyphenylacetate 2,3-dioxygenase (hpcB) from Escherichia coli.